A 793-amino-acid polypeptide reads, in one-letter code: Xaa-Pro dipeptidyl-peptidase (793 aa).

Residues S363, D483, and H514 each act as charge relay system in the active site.

It belongs to the peptidase S15 family. Homodimer.

It localises to the cytoplasm. The enzyme catalyses Hydrolyzes Xaa-Pro-|- bonds to release unblocked, N-terminal dipeptides from substrates including Ala-Pro-|-p-nitroanilide and (sequentially) Tyr-Pro-|-Phe-Pro-|-Gly-Pro-|-Ile.. In terms of biological role, removes N-terminal dipeptides sequentially from polypeptides having unsubstituted N-termini provided that the penultimate residue is proline. The protein is Xaa-Pro dipeptidyl-peptidase of Lactobacillus helveticus (strain DPC 4571).